A 234-amino-acid chain; its full sequence is Golgi SNAP receptor complex member 1 (234 aa).

The Cytoplasmic portion of the chain corresponds to 1-212 (MSETWEALRK…MQKIKTKKQK (212 aa)). Residues 54–121 (VTTEIEGLIE…RDNVDQVLQR (68 aa)) adopt a coiled-coil conformation. A helical; Anchor for type IV membrane protein membrane pass occupies residues 213–233 (NTLILAAVISSCLIFTIFWII). Position 234 (Asn234) is a topological domain, vesicular.

Belongs to the GOSR1 family. Component of several multiprotein Golgi SNARE complexes.

Its subcellular location is the golgi apparatus membrane. Its function is as follows. Involved in transport from the ER to the Golgi apparatus as well as in intra-Golgi transport. It belongs to a super-family of proteins called t-SNAREs or soluble NSF (N-ethylmaleimide-sensitive factor) attachment protein receptor. Cooperates with ykt-6 for proper expression of Golgi-resident proteins. Required along with ykt-6 for normal embryonic development, seam cell division or differentiation, and ray formation. This chain is Golgi SNAP receptor complex member 1 (gos-28), found in Caenorhabditis elegans.